A 321-amino-acid polypeptide reads, in one-letter code: Ferredoxin--NADP reductase (321 aa).

7 residues coordinate FAD: D28, Q36, Y41, A81, F115, D274, and S315.

Belongs to the ferredoxin--NADP reductase type 2 family. In terms of assembly, homodimer. The cofactor is FAD.

The enzyme catalyses 2 reduced [2Fe-2S]-[ferredoxin] + NADP(+) + H(+) = 2 oxidized [2Fe-2S]-[ferredoxin] + NADPH. This is Ferredoxin--NADP reductase from Frankia casuarinae (strain DSM 45818 / CECT 9043 / HFP020203 / CcI3).